The sequence spans 234 residues: Small ribosomal subunit protein uS3 (234 aa).

The region spanning isoleucine 39–lysine 107 is the KH type-2 domain.

It belongs to the universal ribosomal protein uS3 family. In terms of assembly, part of the 30S ribosomal subunit. Forms a tight complex with proteins S10 and S14.

In terms of biological role, binds the lower part of the 30S subunit head. Binds mRNA in the 70S ribosome, positioning it for translation. The polypeptide is Small ribosomal subunit protein uS3 (Helicobacter pylori (strain J99 / ATCC 700824) (Campylobacter pylori J99)).